Reading from the N-terminus, the 146-residue chain is Hemoglobin subunit beta (146 aa).

V1 is modified (N-acetylvaline). Residues 2-146 (HLTGEEKSAV…VANALAHKYH (145 aa)) enclose the Globin domain. T12 is modified (phosphothreonine). S44 is subject to Phosphoserine. Position 59 is an N6-acetyllysine (K59). H63 provides a ligand contact to heme b. N6-acetyllysine is present on K82. H92 is a binding site for heme b. C93 carries the post-translational modification S-nitrosocysteine. K144 carries the post-translational modification N6-acetyllysine.

This sequence belongs to the globin family. In terms of assembly, heterotetramer of two alpha chains and two beta chains. As to expression, red blood cells.

In terms of biological role, involved in oxygen transport from the lung to the various peripheral tissues. The chain is Hemoglobin subunit beta (HBB) from Mico argentatus (Silvery marmoset).